The primary structure comprises 431 residues: Glucose-1-phosphate adenylyltransferase (431 aa).

Lys-39 serves as a coordination point for beta-D-fructose 1,6-bisphosphate. AMP contacts are provided by Arg-40, His-46, and Arg-52. Tyr-114 serves as a coordination point for alpha-D-glucose 1-phosphate. Residue Arg-130 participates in AMP binding. Residues Gly-179, 194-195 (EK), and Ser-212 each bind alpha-D-glucose 1-phosphate. AMP is bound at residue Arg-386. Beta-D-fructose 1,6-bisphosphate contacts are provided by residues 419–423 (REMLR) and 429–431 (QER).

It belongs to the bacterial/plant glucose-1-phosphate adenylyltransferase family. Homotetramer.

The enzyme catalyses alpha-D-glucose 1-phosphate + ATP + H(+) = ADP-alpha-D-glucose + diphosphate. Its pathway is glycan biosynthesis; glycogen biosynthesis. Its activity is regulated as follows. Allosterically activated by fructose-1,6-bisphosphate (F16BP) and inhibited by AMP. Functionally, involved in the biosynthesis of ADP-glucose, a building block required for the elongation reactions to produce glycogen. Catalyzes the reaction between ATP and alpha-D-glucose 1-phosphate (G1P) to produce pyrophosphate and ADP-Glc. The chain is Glucose-1-phosphate adenylyltransferase from Enterobacter sp. (strain 638).